The sequence spans 277 residues: MALKNFKPTSDGKRHQVAINYSELSNEGPERSLLAPLKRTGGRNNNGRMTVRHQGGGHKRRYRIIDFKRNKFDVPAKVARIEYDPNRTAFIALLHYADGEKSYILAPQRLQVGDTVVSAKTLDNVDVKPGNCMPLRVMPIGTIIHNVELKPGKGGQVARSAGNYIQLMGKEGKYAQLKMPSGEMRLVLLECMATVGMVSNPDNSNTKIGKAGRTRWMGKRPSVRGVVMNPVDHPHGGGEGRTSGGRHPVTPWGVPTKGKKTRSKTKASDRLIMRRRK.

A disordered region spans residues 227-277 (VMNPVDHPHGGGEGRTSGGRHPVTPWGVPTKGKKTRSKTKASDRLIMRRRK). Residues 266–277 (KASDRLIMRRRK) are compositionally biased toward basic and acidic residues.

The protein belongs to the universal ribosomal protein uL2 family. In terms of assembly, part of the 50S ribosomal subunit. Forms a bridge to the 30S subunit in the 70S ribosome.

Functionally, one of the primary rRNA binding proteins. Required for association of the 30S and 50S subunits to form the 70S ribosome, for tRNA binding and peptide bond formation. It has been suggested to have peptidyltransferase activity; this is somewhat controversial. Makes several contacts with the 16S rRNA in the 70S ribosome. In Magnetococcus marinus (strain ATCC BAA-1437 / JCM 17883 / MC-1), this protein is Large ribosomal subunit protein uL2.